The following is a 204-amino-acid chain: Recombination protein RecR (204 aa).

The C4-type zinc finger occupies 59–74 (CTRCNTFTELEICGTC). In terms of domain architecture, Toprim spans 82 to 181 (TLLCVVETPA…KVSRLARGVP (100 aa)).

The protein belongs to the RecR family.

Functionally, may play a role in DNA repair. It seems to be involved in an RecBC-independent recombinational process of DNA repair. It may act with RecF and RecO. The protein is Recombination protein RecR of Cupriavidus metallidurans (strain ATCC 43123 / DSM 2839 / NBRC 102507 / CH34) (Ralstonia metallidurans).